The following is a 393-amino-acid chain: Small ribosomal subunit protein bS1 (393 aa).

S1 motif domains follow at residues 16-90 (GDKV…LSKR), 108-173 (NQTI…LSRK), 194-262 (GDVI…LSIK), and 279-348 (GDVI…LSIK). Polar residues predominate over residues 356 to 369 (VIESDSETTQSYLD). Residues 356-381 (VIESDSETTQSYLDNGSDDEDNPTLG) form a disordered region.

Belongs to the bacterial ribosomal protein bS1 family.

In terms of biological role, binds mRNA; thus facilitating recognition of the initiation point. It is needed to translate mRNA with a short Shine-Dalgarno (SD) purine-rich sequence. This is Small ribosomal subunit protein bS1 (rpsA) from Staphylococcus saprophyticus subsp. saprophyticus (strain ATCC 15305 / DSM 20229 / NCIMB 8711 / NCTC 7292 / S-41).